The primary structure comprises 641 residues: RING finger containing E3 ubiquitin-protein ligase WSV403 (641 aa).

The segment at 329-371 adopts an RING-type; atypical zinc-finger fold; the sequence is CVGCLYDIEDEKRCYKLPCGHFMHTFCLSNKCSKANFRCVKCF.

It catalyses the reaction S-ubiquitinyl-[E2 ubiquitin-conjugating enzyme]-L-cysteine + [acceptor protein]-L-lysine = [E2 ubiquitin-conjugating enzyme]-L-cysteine + N(6)-ubiquitinyl-[acceptor protein]-L-lysine.. Its pathway is protein modification; protein ubiquitination. In terms of biological role, probable E3 ubiquitin-protein ligase which accepts ubiquitin from an E2 ubiquitin-conjugating enzyme in the form of a thioester and then directly transfers the ubiquitin to targeted substrates. This chain is RING finger containing E3 ubiquitin-protein ligase WSV403, found in White spot syndrome virus (isolate Shrimp/China/Tongan/1996) (WSSV).